A 677-amino-acid chain; its full sequence is Bifunctional ribose 1,5-bisphosphokinase-thymidine phosphorylase (677 aa).

The ribose 1,5-bisphosphokinase stretch occupies residues 1 to 187; that stretch reads MPGTLFLIVG…IAGACDLNAE (187 aa). Residues 188–677 are thymidinephosphorylase; it reads ITRFPVTIGS…AQAQSAFKIL (490 aa).

The protein in the N-terminal section; belongs to the ribose 1,5-bisphosphokinase family. This sequence in the C-terminal section; belongs to the thymidine/pyrimidine-nucleoside phosphorylase family. Type 2 subfamily.

It carries out the reaction alpha-D-ribose 1,5-bisphosphate + ATP = 5-phospho-alpha-D-ribose 1-diphosphate + ADP. The enzyme catalyses thymidine + phosphate = 2-deoxy-alpha-D-ribose 1-phosphate + thymine. The protein operates within metabolic intermediate biosynthesis; 5-phospho-alpha-D-ribose 1-diphosphate biosynthesis; 5-phospho-alpha-D-ribose 1-diphosphate from D-ribose 5-phosphate (route II): step 3/3. Catalyzes the phosphorylation of ribose 1,5-bisphosphate to 5-phospho-D-ribosyl alpha-1-diphosphate (PRPP). This is Bifunctional ribose 1,5-bisphosphokinase-thymidine phosphorylase (phnN) from Roseobacter denitrificans (strain ATCC 33942 / OCh 114) (Erythrobacter sp. (strain OCh 114)).